Here is a 239-residue protein sequence, read N- to C-terminus: Small ribosomal subunit protein eS4 (239 aa).

The S4 RNA-binding domain maps to 37–99; it reads IPLAVVIRDY…ADLYFRVIPD (63 aa).

Belongs to the eukaryotic ribosomal protein eS4 family.

The polypeptide is Small ribosomal subunit protein eS4 (Saccharolobus islandicus (strain Y.N.15.51 / Yellowstone #2) (Sulfolobus islandicus)).